Here is a 239-residue protein sequence, read N- to C-terminus: Sugar fermentation stimulation protein homolog (239 aa).

Belongs to the SfsA family.

The chain is Sugar fermentation stimulation protein homolog from Shewanella woodyi (strain ATCC 51908 / MS32).